A 696-amino-acid polypeptide reads, in one-letter code: DNA ligase (696 aa).

NAD(+) contacts are provided by residues 41-45 (DGQYD), 90-91 (SL), and E120. K122 acts as the N6-AMP-lysine intermediate in catalysis. Residues R143, E180, K296, and K320 each contribute to the NAD(+) site. Zn(2+)-binding residues include C414, C417, C433, and C439. In terms of domain architecture, BRCT spans 603 to 692 (STPRTLEGLT…PDAVARPAEE (90 aa)).

This sequence belongs to the NAD-dependent DNA ligase family. LigA subfamily. It depends on Mg(2+) as a cofactor. Mn(2+) serves as cofactor.

It carries out the reaction NAD(+) + (deoxyribonucleotide)n-3'-hydroxyl + 5'-phospho-(deoxyribonucleotide)m = (deoxyribonucleotide)n+m + AMP + beta-nicotinamide D-nucleotide.. In terms of biological role, DNA ligase that catalyzes the formation of phosphodiester linkages between 5'-phosphoryl and 3'-hydroxyl groups in double-stranded DNA using NAD as a coenzyme and as the energy source for the reaction. It is essential for DNA replication and repair of damaged DNA. This Kineococcus radiotolerans (strain ATCC BAA-149 / DSM 14245 / SRS30216) protein is DNA ligase.